Consider the following 267-residue polypeptide: Formamidopyrimidine-DNA glycosylase (267 aa).

Proline 2 serves as the catalytic Schiff-base intermediate with DNA. The active-site Proton donor is the glutamate 3. The active-site Proton donor; for beta-elimination activity is lysine 53. DNA is bound by residues histidine 82 and arginine 100. An FPG-type zinc finger spans residues 230–264 (AVYGREGLPCPACGRPVERRVVAGRGTHFCPTCQG). The active-site Proton donor; for delta-elimination activity is arginine 254.

The protein belongs to the FPG family. In terms of assembly, monomer. Zn(2+) is required as a cofactor.

The enzyme catalyses Hydrolysis of DNA containing ring-opened 7-methylguanine residues, releasing 2,6-diamino-4-hydroxy-5-(N-methyl)formamidopyrimidine.. It catalyses the reaction 2'-deoxyribonucleotide-(2'-deoxyribose 5'-phosphate)-2'-deoxyribonucleotide-DNA = a 3'-end 2'-deoxyribonucleotide-(2,3-dehydro-2,3-deoxyribose 5'-phosphate)-DNA + a 5'-end 5'-phospho-2'-deoxyribonucleoside-DNA + H(+). Functionally, involved in base excision repair of DNA damaged by oxidation or by mutagenic agents. Acts as a DNA glycosylase that recognizes and removes damaged bases. Has a preference for oxidized purines, such as 7,8-dihydro-8-oxoguanine (8-oxoG). Has AP (apurinic/apyrimidinic) lyase activity and introduces nicks in the DNA strand. Cleaves the DNA backbone by beta-delta elimination to generate a single-strand break at the site of the removed base with both 3'- and 5'-phosphates. This Thermus thermophilus (strain ATCC BAA-163 / DSM 7039 / HB27) protein is Formamidopyrimidine-DNA glycosylase.